Here is a 285-residue protein sequence, read N- to C-terminus: GTP cyclohydrolase 1 type 2 homolog (285 aa).

Positions 65, 66, 104, 230, and 234 each coordinate a divalent metal cation.

This sequence belongs to the GTP cyclohydrolase I type 2/NIF3 family. In terms of assembly, homohexamer.

This Streptomyces coelicolor (strain ATCC BAA-471 / A3(2) / M145) protein is GTP cyclohydrolase 1 type 2 homolog.